The primary structure comprises 71 residues: Small ribosomal subunit protein bS18 (71 aa).

The protein belongs to the bacterial ribosomal protein bS18 family. Part of the 30S ribosomal subunit. Forms a tight heterodimer with protein bS6.

Functionally, binds as a heterodimer with protein bS6 to the central domain of the 16S rRNA, where it helps stabilize the platform of the 30S subunit. In Microcystis aeruginosa (strain NIES-843 / IAM M-2473), this protein is Small ribosomal subunit protein bS18.